We begin with the raw amino-acid sequence, 657 residues long: Filensin (657 aa).

The interval 1 to 38 (MYRSSFLREVRKEKYERSDAYDELRGSPEFDSLAQAQG) is head. Residues 38-318 (GLENLQELNE…RIIENEDSRL (281 aa)) form the IF rod domain. The tract at residues 39–73 (LENLQELNERFASYINRARVLEQRNTILRKQLETF) is coil 1A. Residues 74–82 (QRMDELVGL) are linker 1. The interval 83 to 182 (DEAFAGQIEF…RYKKNLMEIQ (100 aa)) is coil 1B. Positions 183–199 (TYVNILQQIIQTTPRVS) are linker 12. The interval 200–318 (PITTGISEEK…RIIENEDSRL (119 aa)) is coil 2. Residues 319 to 657 (NSAIAGTPVT…SKKKPGDKGS (339 aa)) are tail. Disordered regions lie at residues 503-530 (IGGDVEPIPELPEPSEPSEKEKRDICER) and 565-593 (PDVSEPEAVPSPGLISPAEPGVLQETDHD). Over residues 519–530 (PSEKEKRDICER) the composition is skewed to basic and acidic residues.

This sequence belongs to the intermediate filament family. As to expression, detected in eye lens fiber cells (at protein level). Detected in embryonic eye lens.

It localises to the cell membrane. The protein resides in the cytoplasm. Its subcellular location is the cytoskeleton. It is found in the cell cortex. In terms of biological role, required for the correct formation of lens intermediate filaments. This Gallus gallus (Chicken) protein is Filensin (BFSP1).